Consider the following 258-residue polypeptide: Dihydroorotate dehydrogenase B (NAD(+)), electron transfer subunit (258 aa).

Residues 2 to 100 (ILKENLTVVS…LGPQGNGFDL (99 aa)) form the FAD-binding FR-type domain. FAD-binding positions include 51-54 (RPIS), 68-70 (IYR), and 75-76 (GT). Residues Cys-220, Cys-225, Cys-228, and Cys-244 each coordinate [2Fe-2S] cluster.

This sequence belongs to the PyrK family. In terms of assembly, heterotetramer of 2 PyrK and 2 PyrD type B subunits. [2Fe-2S] cluster is required as a cofactor. The cofactor is FAD.

Its pathway is pyrimidine metabolism; UMP biosynthesis via de novo pathway; orotate from (S)-dihydroorotate (NAD(+) route): step 1/1. Responsible for channeling the electrons from the oxidation of dihydroorotate from the FMN redox center in the PyrD type B subunit to the ultimate electron acceptor NAD(+). The polypeptide is Dihydroorotate dehydrogenase B (NAD(+)), electron transfer subunit (Streptococcus mutans serotype c (strain ATCC 700610 / UA159)).